A 439-amino-acid chain; its full sequence is Xylose isomerase (439 aa).

Catalysis depends on residues His-101 and Asp-104. The Mg(2+) site is built by Glu-232, Glu-268, His-271, Asp-296, Asp-307, Asp-309, and Asp-339.

Belongs to the xylose isomerase family. Homotetramer. Mg(2+) is required as a cofactor.

It localises to the cytoplasm. The catalysed reaction is alpha-D-xylose = alpha-D-xylulofuranose. The polypeptide is Xylose isomerase (Histophilus somni (strain 2336) (Haemophilus somnus)).